The sequence spans 297 residues: Rhomboid-type serine protease 2 (297 aa).

6 helical membrane-spanning segments follow: residues 14 to 34 (IQHP…IFLL), 60 to 80 (ISFY…LVAL), 98 to 118 (IVLN…SIGF), 120 to 140 (PDEA…YWAI), 155 to 175 (LVVP…IVIP), and 179 to 199 (FIGH…YLDV). S128 acts as the Nucleophile in catalysis. H182 is an active-site residue. Positions 268 to 297 (DLEAGTRSRGNSSVDPTTSFPGTGQTLGTQ) are disordered. The span at 275-297 (SRGNSSVDPTTSFPGTGQTLGTQ) shows a compositional bias: polar residues.

The protein belongs to the peptidase S54 family.

Its subcellular location is the golgi apparatus membrane. The protein resides in the golgi apparatus. The protein localises to the cis-Golgi network membrane. The catalysed reaction is Cleaves type-1 transmembrane domains using a catalytic dyad composed of serine and histidine that are contributed by different transmembrane domains.. Probable rhomboid-type serine protease that catalyzes intramembrane proteolysis. This chain is Rhomboid-type serine protease 2 (RBD2), found in Yarrowia lipolytica (strain CLIB 122 / E 150) (Yeast).